The primary structure comprises 496 residues: Beta-amylase (496 aa).

The residue at position 2 (alanine 2) is an N-acetylalanine. Positions 54, 94, and 102 each coordinate substrate. Residue glutamate 187 is the Proton donor of the active site. Residues lysine 296, histidine 301, and threonine 343 each coordinate substrate. Catalysis depends on glutamate 381, which acts as the Proton acceptor. Residues 382 to 383 and arginine 421 contribute to the substrate site; that span reads NA.

This sequence belongs to the glycosyl hydrolase 14 family. As to quaternary structure, monomer.

It catalyses the reaction Hydrolysis of (1-&gt;4)-alpha-D-glucosidic linkages in polysaccharides so as to remove successive maltose units from the non-reducing ends of the chains.. In Glycine max (Soybean), this protein is Beta-amylase (BMY1).